The following is an 891-amino-acid chain: Alanine--tRNA ligase (891 aa).

Residues histidine 564, histidine 568, cysteine 677, and histidine 681 each coordinate Zn(2+).

The protein belongs to the class-II aminoacyl-tRNA synthetase family. It depends on Zn(2+) as a cofactor.

It is found in the cytoplasm. It catalyses the reaction tRNA(Ala) + L-alanine + ATP = L-alanyl-tRNA(Ala) + AMP + diphosphate. Catalyzes the attachment of alanine to tRNA(Ala) in a two-step reaction: alanine is first activated by ATP to form Ala-AMP and then transferred to the acceptor end of tRNA(Ala). Also edits incorrectly charged Ser-tRNA(Ala) and Gly-tRNA(Ala) via its editing domain. In Bradyrhizobium sp. (strain ORS 278), this protein is Alanine--tRNA ligase.